The following is a 389-amino-acid chain: Protein CysO (389 aa).

An N6-(pyridoxal phosphate)lysine modification is found at Lys-127. Pyridoxal 5'-phosphate contacts are provided by residues Asn-155, 261-265, and Ser-341; that span reads GTSGH.

This sequence belongs to the cysteine synthase/cystathionine beta-synthase family. In terms of assembly, homodimer. Requires pyridoxal 5'-phosphate as cofactor.

The catalysed reaction is O-acetyl-L-serine + hydrogen sulfide = L-cysteine + acetate. It carries out the reaction O-phospho-L-serine + hydrogen sulfide + H(+) = L-cysteine + phosphate. The enzyme catalyses L-homocysteine + L-serine = L,L-cystathionine + H2O. The protein operates within amino-acid biosynthesis; L-cysteine biosynthesis; L-cysteine from L-serine: step 2/2. Functionally, cysteine synthase that can also catalyze the synthesis of S-sulfo-L-cysteine from thiosulfate and O(3)-acetyl-L-serine, as well as the sulfhydrylation of L-serine by sulfide. The chain is Protein CysO (cysO) from Aeropyrum pernix (strain ATCC 700893 / DSM 11879 / JCM 9820 / NBRC 100138 / K1).